Reading from the N-terminus, the 162-residue chain is Peptide deformylase-like (162 aa).

Belongs to the polypeptide deformylase family.

This Staphylococcus aureus (strain COL) protein is Peptide deformylase-like.